We begin with the raw amino-acid sequence, 88 residues long: Elongation factor 1-beta (88 aa).

This sequence belongs to the EF-1-beta/EF-1-delta family.

Its function is as follows. Promotes the exchange of GDP for GTP in EF-1-alpha/GDP, thus allowing the regeneration of EF-1-alpha/GTP that could then be used to form the ternary complex EF-1-alpha/GTP/AAtRNA. This is Elongation factor 1-beta from Haloarcula marismortui (strain ATCC 43049 / DSM 3752 / JCM 8966 / VKM B-1809) (Halobacterium marismortui).